Reading from the N-terminus, the 776-residue chain is Venom dipeptidyl peptidase 4 (776 aa).

The N-terminal stretch at 1 to 25 (MVPLRSFVLLNSLFLVLLAARTVVT) is a signal peptide. 3 N-linked (GlcNAc...) asparagine glycosylation sites follow: Asn-44, Asn-66, and Asn-329. 2 disulfide bridges follow: Cys-449-Cys-452 and Cys-462-Cys-480. 2 N-linked (GlcNAc...) asparagine glycosylation sites follow: Asn-504 and Asn-577. The active-site Charge relay system is the Ser-638. A disulfide bridge links Cys-658 with Cys-769. N-linked (GlcNAc...) asparagine glycosylation is found at Asn-688 and Asn-693. Residues Asp-717 and His-749 each act as charge relay system in the active site.

Belongs to the peptidase S9B family. DPPIV subfamily. Expressed by the venom gland.

It is found in the secreted. The catalysed reaction is Release of an N-terminal dipeptide, Xaa-Yaa-|-Zaa-, from a polypeptide, preferentially when Yaa is Pro, provided Zaa is neither Pro nor hydroxyproline.. With respect to regulation, inhibited by diprotin A. In terms of biological role, venom dipeptidyl-peptidase which removes N-terminal dipeptides sequentially from polypeptides having unsubstituted N-termini provided that the penultimate residue is proline. May process venom proteins into their active forms and/or modulate the chemotactic activity of immune cells after the insect sting. The sequence is that of Venom dipeptidyl peptidase 4 from Vespula vulgaris (Yellow jacket).